Here is a 288-residue protein sequence, read N- to C-terminus: 4-diphosphocytidyl-2-C-methyl-D-erythritol kinase (288 aa).

Lys-13 is a catalytic residue. 96-106 (PMGGGIGGGSS) lines the ATP pocket. Asp-138 is a catalytic residue.

Belongs to the GHMP kinase family. IspE subfamily.

The enzyme catalyses 4-CDP-2-C-methyl-D-erythritol + ATP = 4-CDP-2-C-methyl-D-erythritol 2-phosphate + ADP + H(+). Its pathway is isoprenoid biosynthesis; isopentenyl diphosphate biosynthesis via DXP pathway; isopentenyl diphosphate from 1-deoxy-D-xylulose 5-phosphate: step 3/6. Catalyzes the phosphorylation of the position 2 hydroxy group of 4-diphosphocytidyl-2C-methyl-D-erythritol. The polypeptide is 4-diphosphocytidyl-2-C-methyl-D-erythritol kinase (Aliivibrio fischeri (strain ATCC 700601 / ES114) (Vibrio fischeri)).